Consider the following 27-residue polypeptide: IEPERQEEEEEETRQRVRRGQVRQQQQ.

Residues 1–12 (IEPERQEEEEEE) show a composition bias toward acidic residues. The disordered stretch occupies residues 1–27 (IEPERQEEEEEETRQRVRRGQVRQQQQ).

In terms of biological role, metalloproteinase inhibitor, active on a globulinase from L.albus seeds, thermolysin and gelatinase B. The chain is Metalloproteinase inhibitor 1 from Lupinus albus (White lupine).